The sequence spans 93 residues: MDGIKYVVVTDKSIRLLVKNQYTSNVESGSTRTEIKHWVELFFGVKVIAMNSHRLPGKGRRMGPIMGHTMHYRRMIITLQPGYSIPPLRTKRT.

It belongs to the universal ribosomal protein uL23 family. Part of the 50S ribosomal subunit.

The protein localises to the plastid. Its subcellular location is the chloroplast. Binds to 23S rRNA. The protein is Large ribosomal subunit protein uL23cz/uL23cy (rpl23-A) of Gossypium barbadense (Sea Island cotton).